The following is a 343-amino-acid chain: Anthranilate phosphoribosyltransferase (343 aa).

5-phospho-alpha-D-ribose 1-diphosphate-binding positions include glycine 84, 87–88 (GD), threonine 92, 94–97 (NIST), 112–120 (KHGNRSVSS), and serine 124. Glycine 84 contributes to the anthranilate binding site. Serine 96 is a Mg(2+) binding site. Asparagine 115 provides a ligand contact to anthranilate. Position 170 (arginine 170) interacts with anthranilate. Aspartate 229 and glutamate 230 together coordinate Mg(2+).

It belongs to the anthranilate phosphoribosyltransferase family. As to quaternary structure, homodimer. The cofactor is Mg(2+).

It carries out the reaction N-(5-phospho-beta-D-ribosyl)anthranilate + diphosphate = 5-phospho-alpha-D-ribose 1-diphosphate + anthranilate. It functions in the pathway amino-acid biosynthesis; L-tryptophan biosynthesis; L-tryptophan from chorismate: step 2/5. In terms of biological role, catalyzes the transfer of the phosphoribosyl group of 5-phosphorylribose-1-pyrophosphate (PRPP) to anthranilate to yield N-(5'-phosphoribosyl)-anthranilate (PRA). In Stenotrophomonas maltophilia (strain K279a), this protein is Anthranilate phosphoribosyltransferase.